The sequence spans 224 residues: Peroxiredoxin-6 (224 aa).

Residues 4–168 (LLLGDEAPNF…ILRVVDSLQL (165 aa)) enclose the Thioredoxin domain. Residues 30-39 (DSWGILFSHP) are required and sufficient for targeting to lysosomes and lamellar bodies. Residue C46 is the Cysteine sulfenic acid (-SOH) intermediate; for peroxidase activity of the active site. Y88 is modified (phosphotyrosine). D139 serves as the catalytic For phospholipase activity. A Phosphothreonine; by MAPK modification is found at T176.

Belongs to the peroxiredoxin family. Prx6 subfamily. In terms of assembly, homodimer. Interacts with GSTP1; mediates PRDX6 glutathionylation and regeneration. In terms of processing, irreversibly inactivated by overoxidation of Cys-46 to sulfinic acid (Cys-SO(2)H) and sulfonic acid (Cys-SO(3)H) forms upon oxidative stress. Phosphorylation at Thr-176 by MAP kinases increases the phospholipase activity of the enzyme. The phosphorylated form exhibits a greater lysophosphatidylcholine acyltransferase activity compared to the non-phosphorylated form.

The protein resides in the cytoplasm. It localises to the lysosome. The enzyme catalyses a hydroperoxide + 2 glutathione = an alcohol + glutathione disulfide + H2O. It carries out the reaction a 1,2-diacyl-sn-glycero-3-phosphocholine + H2O = a 1-acyl-sn-glycero-3-phosphocholine + a fatty acid + H(+). It catalyses the reaction a 1-acyl-sn-glycero-3-phosphocholine + an acyl-CoA = a 1,2-diacyl-sn-glycero-3-phosphocholine + CoA. The catalysed reaction is 1-hexadecanoyl-sn-glycero-3-phosphocholine + hexadecanoyl-CoA = 1,2-dihexadecanoyl-sn-glycero-3-phosphocholine + CoA. The enzyme catalyses 1,2-dihexadecanoyl-sn-glycero-3-phosphocholine + H2O = 1-hexadecanoyl-sn-glycero-3-phosphocholine + hexadecanoate + H(+). Its function is as follows. Thiol-specific peroxidase that catalyzes the reduction of hydrogen peroxide and organic hydroperoxides to water and alcohols, respectively. Can reduce H(2)O(2) and short chain organic, fatty acid, and phospholipid hydroperoxides. Also has phospholipase activity, and can therefore either reduce the oxidized sn-2 fatty acyl group of phospholipids (peroxidase activity) or hydrolyze the sn-2 ester bond of phospholipids (phospholipase activity). These activities are dependent on binding to phospholipids at acidic pH and to oxidized phospholipds at cytosolic pH. Plays a role in cell protection against oxidative stress by detoxifying peroxides and in phospholipid homeostasis. Exhibits acyl-CoA-dependent lysophospholipid acyltransferase which mediates the conversion of lysophosphatidylcholine (1-acyl-sn-glycero-3-phosphocholine or LPC) into phosphatidylcholine (1,2-diacyl-sn-glycero-3-phosphocholine or PC). Shows a clear preference for LPC as the lysophospholipid and for palmitoyl CoA as the fatty acyl substrate. This chain is Peroxiredoxin-6 (PRDX6), found in Gallus gallus (Chicken).